The primary structure comprises 302 residues: Elongation factor Ts (302 aa).

The tract at residues threonine 80 to valine 83 is involved in Mg(2+) ion dislocation from EF-Tu.

Belongs to the EF-Ts family.

The protein resides in the cytoplasm. Its function is as follows. Associates with the EF-Tu.GDP complex and induces the exchange of GDP to GTP. It remains bound to the aminoacyl-tRNA.EF-Tu.GTP complex up to the GTP hydrolysis stage on the ribosome. The chain is Elongation factor Ts from Methylibium petroleiphilum (strain ATCC BAA-1232 / LMG 22953 / PM1).